We begin with the raw amino-acid sequence, 267 residues long: Diphthine synthase (267 aa).

Residues L9, D85, V88, 113-114, L170, A211, and H236 contribute to the S-adenosyl-L-methionine site; that span reads SI.

It belongs to the diphthine synthase family. Homodimer.

It carries out the reaction 2-[(3S)-amino-3-carboxypropyl]-L-histidyl-[translation elongation factor 2] + 3 S-adenosyl-L-methionine = diphthine-[translation elongation factor 2] + 3 S-adenosyl-L-homocysteine + 3 H(+). It functions in the pathway protein modification; peptidyl-diphthamide biosynthesis. In terms of biological role, S-adenosyl-L-methionine-dependent methyltransferase that catalyzes the trimethylation of the amino group of the modified target histidine residue in translation elongation factor 2 (EF-2), to form an intermediate called diphthine. The three successive methylation reactions represent the second step of diphthamide biosynthesis. This is Diphthine synthase from Methanococcoides burtonii (strain DSM 6242 / NBRC 107633 / OCM 468 / ACE-M).